The sequence spans 529 residues: Laccase-1 (529 aa).

Positions 1-23 (MFPGARILATLTLALHLLHGTHA) are cleaved as a signal peptide. Plastocyanin-like domains are found at residues 25–159 (IGPT…FIVY), 170–312 (DVDN…ILRY), and 380–499 (TAPV…FAED). Residue Asn-57 is glycosylated (N-linked (GlcNAc...) asparagine). Positions 96, 98, 141, and 143 each coordinate Cu cation. Cystine bridges form between Cys-117/Cys-514 and Cys-149/Cys-236. N-linked (GlcNAc...) asparagine glycosylation is found at Asn-239 and Asn-282. Residues His-425, His-428, His-430, His-481, Cys-482, His-483, and His-487 each contribute to the Cu cation site.

Belongs to the multicopper oxidase family. It depends on Cu cation as a cofactor.

It localises to the secreted. The catalysed reaction is 4 hydroquinone + O2 = 4 benzosemiquinone + 2 H2O. In terms of biological role, lignin degradation and detoxification of lignin-derived products. This Pleurotus ostreatus (Oyster mushroom) protein is Laccase-1 (POX1).